The primary structure comprises 380 residues: MAPNIRKSHPLLKMINNSLIDLPTPSNISAWWNFGSLLAVCLITQILTGLLLAMHYTADTTLAFSSVAHTCRNVQYGWLIRNLHANGASFFFICIFLHIGRGLYYGSYLYKETWNTGVILLLTLMATAFVGYVLPWGQMSFWGATVITNLFSAVPYIGQTLVEWAWGGFSVDNPTLTRFFALHFLLPFVIAGITIIHLTFLHESGSNNPLGISSNSDKIPFHPYYSIKDILGLTLMFTPFLMLALFSPNLLGDPENFTPANPLVTPPHIKPEWYFLFAYAILRSIPNKLGGVLALAASVLILLLIPFLHKSKQRTMTFRPLSQTLFWLLVANLLILTWIGSQPVEHPFIIIGQMASLSYFSILLILFPMIGTLENKILNY.

4 helical membrane-spanning segments follow: residues 34–54 (FGSL…LLAM), 78–99 (WLIR…FLHI), 114–134 (WNTG…GYVL), and 179–199 (FFAL…IHLT). 2 residues coordinate heme b: histidine 84 and histidine 98. 2 residues coordinate heme b: histidine 183 and histidine 197. Histidine 202 contributes to the a ubiquinone binding site. The next 4 membrane-spanning stretches (helical) occupy residues 227 to 247 (IKDI…ALFS), 289 to 309 (LGGV…PFLH), 321 to 341 (LSQT…WIGS), and 348 to 368 (FIII…ILFP).

Belongs to the cytochrome b family. In terms of assembly, the cytochrome bc1 complex contains 11 subunits: 3 respiratory subunits (MT-CYB, CYC1 and UQCRFS1), 2 core proteins (UQCRC1 and UQCRC2) and 6 low-molecular weight proteins (UQCRH/QCR6, UQCRB/QCR7, UQCRQ/QCR8, UQCR10/QCR9, UQCR11/QCR10 and a cleavage product of UQCRFS1). This cytochrome bc1 complex then forms a dimer. The cofactor is heme b.

Its subcellular location is the mitochondrion inner membrane. Its function is as follows. Component of the ubiquinol-cytochrome c reductase complex (complex III or cytochrome b-c1 complex) that is part of the mitochondrial respiratory chain. The b-c1 complex mediates electron transfer from ubiquinol to cytochrome c. Contributes to the generation of a proton gradient across the mitochondrial membrane that is then used for ATP synthesis. The polypeptide is Cytochrome b (MT-CYB) (Alectoris rufa (Red-legged partridge)).